Reading from the N-terminus, the 458-residue chain is Argininosuccinate lyase (458 aa).

This sequence belongs to the lyase 1 family. Argininosuccinate lyase subfamily.

The protein localises to the cytoplasm. It carries out the reaction 2-(N(omega)-L-arginino)succinate = fumarate + L-arginine. It participates in amino-acid biosynthesis; L-arginine biosynthesis; L-arginine from L-ornithine and carbamoyl phosphate: step 3/3. This chain is Argininosuccinate lyase, found in Haemophilus ducreyi (strain 35000HP / ATCC 700724).